A 235-amino-acid chain; its full sequence is Ribonuclease PH (235 aa).

Residues R86 and 124–126 contribute to the phosphate site; that span reads GTR.

It belongs to the RNase PH family. As to quaternary structure, homohexameric ring arranged as a trimer of dimers.

It catalyses the reaction tRNA(n+1) + phosphate = tRNA(n) + a ribonucleoside 5'-diphosphate. Phosphorolytic 3'-5' exoribonuclease that plays an important role in tRNA 3'-end maturation. Removes nucleotide residues following the 3'-CCA terminus of tRNAs; can also add nucleotides to the ends of RNA molecules by using nucleoside diphosphates as substrates, but this may not be physiologically important. Probably plays a role in initiation of 16S rRNA degradation (leading to ribosome degradation) during starvation. The polypeptide is Ribonuclease PH (Legionella pneumophila (strain Corby)).